The sequence spans 251 residues: 3-deoxy-manno-octulosonate cytidylyltransferase (251 aa).

It belongs to the KdsB family.

It is found in the cytoplasm. The catalysed reaction is 3-deoxy-alpha-D-manno-oct-2-ulosonate + CTP = CMP-3-deoxy-beta-D-manno-octulosonate + diphosphate. It participates in nucleotide-sugar biosynthesis; CMP-3-deoxy-D-manno-octulosonate biosynthesis; CMP-3-deoxy-D-manno-octulosonate from 3-deoxy-D-manno-octulosonate and CTP: step 1/1. The protein operates within bacterial outer membrane biogenesis; lipopolysaccharide biosynthesis. Functionally, activates KDO (a required 8-carbon sugar) for incorporation into bacterial lipopolysaccharide in Gram-negative bacteria. The polypeptide is 3-deoxy-manno-octulosonate cytidylyltransferase (Brucella canis (strain ATCC 23365 / NCTC 10854 / RM-666)).